Reading from the N-terminus, the 362-residue chain is MAKVVDCVLLLAFIAVVRGQEACRTPDHRDGVCHPVQQCPSVRDEFFNSDRVLSEDEIDYLRKLQCKTKDVTICCPDGVTTVDRNPTAVRDGLPNPKAFECGLDTLADRIIGGNYTAIDEFPWYALLEYQSKKGERAFKCGGSLINGRYVLTAAHCLANKKLDEGERLVNVRLGEYNTATDTDCADGNPDDCADPPQNFGIEAQIVHPGYDKNGPYQHHDIALIRLDRDVTMNNFVSPVCLPPDDFPPTSPGLNVTAVGFGHTGRQRHSGIKKKAQFPVFAQEECDKKWKNIEVIGEQLCAGGVFGIDSCSGDSGGPLMVKRFYWIQEGVISFGNQCALEGWPGVYTRVSSYLDWIRQNIRR.

Residues 1–19 (MAKVVDCVLLLAFIAVVRG) form the signal peptide. Positions 22–75 (ACRTPDHRDGVCHPVQQCPSVRDEFFNSDRVLSEDEIDYLRKLQCKTKDVTICC) constitute a Clip domain. 3 disulfides stabilise this stretch: Cys-23-Cys-74, Cys-33-Cys-66, and Cys-39-Cys-75. In terms of domain architecture, Peptidase S1 spans 110 to 361 (IIGGNYTAID…YLDWIRQNIR (252 aa)). A glycan (N-linked (GlcNAc...) asparagine) is linked at Asn-114. A disulfide bridge connects residues Cys-140 and Cys-156. Catalysis depends on charge relay system residues His-155 and Asp-220. Asn-254 carries an N-linked (GlcNAc...) asparagine glycan. 2 disulfides stabilise this stretch: Cys-285-Cys-300 and Cys-310-Cys-337. Ser-314 acts as the Charge relay system in catalysis.

This sequence belongs to the peptidase S1 family. CLIP subfamily. Forms a covalent heterodimer with SRPN2; the interaction inhibits CLIPB10 catalytic activity. In terms of processing, cleaved by an unknown protease into an active form.

It localises to the secreted. With respect to regulation, inhibited by serpin SRPN2. In terms of biological role, serine protease which preferentially cleaves after arginine residues. Involved in the innate immune response against parasite P.bergei infection by activating the melanization cascade. Probably in the hemolymph, cleaves and activates prophenoloxidase (PPO), which functions in the formation of pigments such as melanin and other polyphenolic compounds. In the susceptible strain G3, appears to be dispensable for ookinete elimination which occurs by lysis. The polypeptide is CLIP domain-containing serine protease B10 (Anopheles gambiae (African malaria mosquito)).